The following is a 199-amino-acid chain: Charged multivesicular body protein 1b (199 aa).

Coiled coils occupy residues 10–30 (NLKFAAKELQRNSKKCDKEEK) and 178–199 (TSVASAEQDELSQRLAKLRDQV). The segment at 167-199 (ELPQGQTGSVGTSVASAEQDELSQRLAKLRDQV) is disordered. A compositionally biased stretch (polar residues) spans 170 to 182 (QGQTGSVGTSVAS). The MIT-interacting motif signature appears at 186 to 196 (DELSQRLAKLR).

The protein belongs to the SNF7 family. Probable peripherally associated component of the endosomal sorting required for transport complex III (ESCRT-III).

The protein localises to the cytoplasm. It is found in the cytosol. The protein resides in the endosome. Its subcellular location is the late endosome membrane. Probable peripherally associated component of the endosomal sorting required for transport complex III (ESCRT-III) which is involved in multivesicular bodies (MVBs) formation and sorting of endosomal cargo proteins into MVBs. MVBs contain intraluminal vesicles (ILVs) that are generated by invagination and scission from the limiting membrane of the endosome and mostly are delivered to lysosomes enabling degradation of membrane proteins, such as stimulated growth factor receptors, lysosomal enzymes and lipids. This chain is Charged multivesicular body protein 1b (chmp1b), found in Danio rerio (Zebrafish).